Reading from the N-terminus, the 850-residue chain is Envelope glycoprotein gp160 (850 aa).

A signal peptide spans 1 to 28 (METQTSWLSLWRWGLMIFGMLMICSARE). Over 29–678 (NLWVTVYYGV…ISNWLWYIKI (650 aa)) the chain is Extracellular. A disulfide bridge connects residues cysteine 50 and cysteine 70. N-linked (GlcNAc...) asparagine; by host glycosylation is found at asparagine 84, asparagine 126, asparagine 133, asparagine 134, asparagine 139, asparagine 152, asparagine 156, asparagine 184, asparagine 193, asparagine 226, asparagine 230, asparagine 237, asparagine 258, asparagine 272, asparagine 285, asparagine 297, asparagine 327, asparagine 334, and asparagine 349. Disulfide bonds link cysteine 115–cysteine 201, cysteine 122–cysteine 192, cysteine 127–cysteine 153, cysteine 214–cysteine 243, and cysteine 224–cysteine 235. Positions 127 to 152 (CSDVNSNNSTDSNSSASNNSPEIMKN) are V1. The segment at 153–192 (CSFNVTTEIRNKRKQEYALFYRQDVVPINSDNKSYILINC) is V2. Residues 292-325 (CTRPNNNTRKGIHMGPGQVLYATGEIIGDIRKAY) are V3. Cysteine 292 and cysteine 326 are oxidised to a cystine. The segment at 357-367 (PSGGDIEITTH) is CD4-binding loop. 2 cysteine pairs are disulfide-bonded: cysteine 371/cysteine 436 and cysteine 378/cysteine 409. The interval 378–409 (CNTSTLFNSSWDENNIKDTNSTNDNTTITIPC) is V4. 8 N-linked (GlcNAc...) asparagine; by host glycosylation sites follow: asparagine 379, asparagine 385, asparagine 397, asparagine 402, asparagine 433, asparagine 439, asparagine 453, and asparagine 457. Residues 447–467 (RDGGNRNGSENGTETFRPTGG) form a disordered region. The segment covering 453 to 462 (NGSENGTETF) has biased composition (polar residues). V5 regions lie at residues 453–465 (NGSENGTETFRPT) and 454–465 (GSENGTETFRPT). Positions 506 to 526 (AVGIGAVFLGFLGTAGSTMGA) are fusion peptide. Positions 568 to 586 (KQLQARVLAVERYLKDQQL) are immunosuppression. A disulfide bridge links cysteine 592 with cysteine 598. Residues asparagine 605, asparagine 610, asparagine 619, asparagine 631, and asparagine 668 are each glycosylated (N-linked (GlcNAc...) asparagine; by host). Residues 627 to 661 (REINNYTGIIYSLIEEAQNQQETNEKDLLALDKWT) are a coiled coil. The tract at residues 656-677 (ALDKWTNLWNWFNISNWLWYIK) is MPER; binding to GalCer. A helical membrane pass occupies residues 679–699 (FIMIIGGLIGLRIIFAVLAIV). At 700 to 850 (NRVRQGYSPL…IRQGLERALL (151 aa)) the chain is on the cytoplasmic side. The YXXL motif; contains endocytosis signal motif lies at 706–709 (YSPL). Cysteine 758 is lipidated: S-palmitoyl cysteine; by host. The short motif at 849–850 (LL) is the Di-leucine internalization motif element.

The protein belongs to the HIV-1 env protein family. As to quaternary structure, the mature envelope protein (Env) consists of a homotrimer of non-covalently associated gp120-gp41 heterodimers. The resulting complex protrudes from the virus surface as a spike. There seems to be as few as 10 spikes on the average virion. Interacts with host CD4, CCR5 and CXCR4. Gp120 also interacts with the C-type lectins CD209/DC-SIGN and CLEC4M/DC-SIGNR (collectively referred to as DC-SIGN(R)). Gp120 and gp41 interact with GalCer. Gp120 interacts with host ITGA4/ITGB7 complex; on CD4+ T-cells, this interaction results in rapid activation of integrin ITGAL/LFA-1, which facilitates efficient cell-to-cell spreading of HIV-1. Gp120 interacts with cell-associated heparan sulfate; this interaction increases virus infectivity on permissive cells and may be involved in infection of CD4- cells. In terms of assembly, the mature envelope protein (Env) consists of a homotrimer of non-covalently associated gp120-gp41 heterodimers. The resulting complex protrudes from the virus surface as a spike. There seems to be as few as 10 spikes on the average virion. Highly glycosylated by host. The high number of glycan on the protein is reffered to as 'glycan shield' because it contributes to hide protein sequence from adaptive immune system. In terms of processing, palmitoylation of the transmembrane protein and of Env polyprotein (prior to its proteolytic cleavage) is essential for their association with host cell membrane lipid rafts. Palmitoylation is therefore required for envelope trafficking to classical lipid rafts, but not for viral replication. Post-translationally, specific enzymatic cleavages in vivo yield mature proteins. Envelope glycoproteins are synthesized as an inactive precursor that is heavily N-glycosylated and processed likely by host cell furin in the Golgi to yield the mature SU and TM proteins. The cleavage site between SU and TM requires the minimal sequence [KR]-X-[KR]-R. About 2 of the 9 disulfide bonds of gp41 are reduced by P4HB/PDI, following binding to CD4 receptor.

The protein localises to the virion membrane. It localises to the host cell membrane. It is found in the host endosome membrane. Functionally, oligomerizes in the host endoplasmic reticulum into predominantly trimers. In a second time, gp160 transits in the host Golgi, where glycosylation is completed. The precursor is then proteolytically cleaved in the trans-Golgi and thereby activated by cellular furin or furin-like proteases to produce gp120 and gp41. Its function is as follows. Attaches the virus to the host lymphoid cell by binding to the primary receptor CD4. This interaction induces a structural rearrangement creating a high affinity binding site for a chemokine coreceptor like CXCR4 and/or CCR5. Acts as a ligand for CD209/DC-SIGN and CLEC4M/DC-SIGNR, which are respectively found on dendritic cells (DCs), and on endothelial cells of liver sinusoids and lymph node sinuses. These interactions allow capture of viral particles at mucosal surfaces by these cells and subsequent transmission to permissive cells. HIV subverts the migration properties of dendritic cells to gain access to CD4+ T-cells in lymph nodes. Virus transmission to permissive T-cells occurs either in trans (without DCs infection, through viral capture and transmission), or in cis (following DCs productive infection, through the usual CD4-gp120 interaction), thereby inducing a robust infection. In trans infection, bound virions remain infectious over days and it is proposed that they are not degraded, but protected in non-lysosomal acidic organelles within the DCs close to the cell membrane thus contributing to the viral infectious potential during DCs' migration from the periphery to the lymphoid tissues. On arrival at lymphoid tissues, intact virions recycle back to DCs' cell surface allowing virus transmission to CD4+ T-cells. Acts as a class I viral fusion protein. Under the current model, the protein has at least 3 conformational states: pre-fusion native state, pre-hairpin intermediate state, and post-fusion hairpin state. During fusion of viral and target intracellular membranes, the coiled coil regions (heptad repeats) assume a trimer-of-hairpins structure, positioning the fusion peptide in close proximity to the C-terminal region of the ectodomain. The formation of this structure appears to drive apposition and subsequent fusion of viral and target cell membranes. Complete fusion occurs in host cell endosomes and is dynamin-dependent, however some lipid transfer might occur at the plasma membrane. The virus undergoes clathrin-dependent internalization long before endosomal fusion, thus minimizing the surface exposure of conserved viral epitopes during fusion and reducing the efficacy of inhibitors targeting these epitopes. Membranes fusion leads to delivery of the nucleocapsid into the cytoplasm. The sequence is that of Envelope glycoprotein gp160 from Human immunodeficiency virus type 1 group M subtype J (isolate SE9173) (HIV-1).